The chain runs to 1145 residues: Protein sumv-2 (1145 aa).

Residues Met1–Arg13 show a composition bias toward basic residues. Disordered stretches follow at residues Met1–Ala310, Gln429–Arg464, His999–Glu1025, Gln1040–Glu1059, and Ile1073–Ile1145. Positions Ala14–Lys34 are enriched in polar residues. Composition is skewed to basic and acidic residues over residues Lys73–Lys104 and Val216–Asp225. Residues Ala226–Arg248 show a composition bias toward low complexity. Over residues Gly455 to Arg464 the composition is skewed to basic and acidic residues. The span at His999–Ser1013 shows a compositional bias: low complexity. A compositionally biased stretch (basic and acidic residues) spans Val1091–Pro1102. Pro residues predominate over residues Gln1121 to Pro1136.

Functionally, influences the activity of genes involved in vulval development. The sequence is that of Protein sumv-2 from Caenorhabditis elegans.